The chain runs to 783 residues: Protein phosphatase 2C 29 (783 aa).

The interval 151 to 194 (SFSALPLQPGPDRSGLFMSGPIERGATSGPLDPPAGEISRSNSA) is disordered. Ser199 bears the Phosphoserine mark. Positions 260–770 (SSGENDLQWA…DDCTVLVIAL (511 aa)) constitute a PPM-type phosphatase domain. Residues Asp295 and Gly296 each contribute to the Mn(2+) site. The interval 555–595 (ETGESVETAERVEERRNDLDRDDGNKEPLVVDSSDSTVNNE) is disordered. The span at 562–580 (TAERVEERRNDLDRDDGNK) shows a compositional bias: basic and acidic residues. Positions 701 and 761 each coordinate Mn(2+).

The protein belongs to the PP2C family. Requires Mg(2+) as cofactor. The cofactor is Mn(2+). In terms of tissue distribution, expressed in roots, leaves, stems, inflorescences, flowers and developing vascular tissue.

The protein localises to the nucleus. The catalysed reaction is O-phospho-L-seryl-[protein] + H2O = L-seryl-[protein] + phosphate. The enzyme catalyses O-phospho-L-threonyl-[protein] + H2O = L-threonyl-[protein] + phosphate. Involved in the regulation of pedicel length and of CLAVATA pathways controlling stem cell identity at shoot and flower meristems. The protein is Protein phosphatase 2C 29 (PLL1) of Arabidopsis thaliana (Mouse-ear cress).